Here is a 966-residue protein sequence, read N- to C-terminus: MDSRCGVCKYIISDCERYVSDNTFYHVKCFICKICKCELPPCFRGKHASLMCGDCEIKLNAPKCFKSHFPIHSVSVVARNKEFHNNCFTCISCNEIIKGGFQYSDELFYCSKCDIIKPPPLPPPLIYKAPIATSKATTSITSPLPTKIPILSTANLIPPLSSSSPLATQISPKTSTIATTTVETTTAETTLPSPFKISQLKNSGDNIYSLSSPSSSSSSSSSSSSSSSSPPNTFNKSSDFLRNPLNNNVKSSSSSIGGNFVNKSQQQQQPIDSCSKSSISISPSSPRPTEDDIKEQVFLLQKQSVQLQIQQQLQQRQIEQLNKNQLGVQKPLNQQPQQQQQQFKPQSPNLSNNDTLDSFSNLNQSLPPPPLINTTTFSNPLLKTKNQSFPTPPTSHIIKENQSQQIPKPSSIDEVDQLPLPPPPITPIPSPSSSSIIINNQQQQQQESQLPPPPPTSIIIDQSILLPPPPPSTEILPQQQSPKLYKPRPKPIVLPPPPLDMEQLPLPPPPLLSSQINQSLKSTQHNQTTSPTIEIPIPPPLPIQKQSIPTRKPQLPQSSNPSPPSPPSPQPSSNIPPLSPKQQQEQQVEPIFSPTGSIIPTPPPPPPIFKMKPLRPQKFRAPTNYIPSLSLHRANKLSNSTEDHIKPPESLVLESSRIEKFEPTINGRKLTELLKHQTFDDIVGEVLNKRISIYKQLVKDDVIFGDVIAAGASGKVYKGIYKGRDVAIKVYSSENFCFNIDEFDREVTIMSLIDSDHPNFTRFYGANKQNKKYLFHVSELVKSGSLRDLLLDKEKPLLYFTQLSIASDIANAMKHLHSIGVIHRDLKSLNVLITEDFTAKVIDFGTSRNVDLAKHMTMNLGTSCYMSPELFKGNGYDETCDVYAFGIVLWEIIARKEPYENINSWSIPVMVAKGDRPTIPADCPSEYSKLIKACWTDKPKKRPSFKEICDTLKKISESLTLKRNKK.

2 consecutive LIM zinc-binding domains span residues 3 to 62 and 63 to 120; these read SRCG…LNAP and KCFK…KPPP. 2 disordered regions span residues 208–291 and 331–588; these read YSLS…PTED and PLNQ…EQQV. A compositionally biased stretch (low complexity) spans 211–231; sequence SSPSSSSSSSSSSSSSSSSPP. The segment covering 232–269 has biased composition (polar residues); that stretch reads NTFNKSSDFLRNPLNNNVKSSSSSIGGNFVNKSQQQQQ. 2 stretches are compositionally biased toward low complexity: residues 270 to 284 and 331 to 350; these read PIDS…ISPS and PLNQ…SPNL. Residues 374 to 389 show a composition bias toward polar residues; it reads TTTFSNPLLKTKNQSF. The span at 419–430 shows a compositional bias: pro residues; the sequence is PLPPPPITPIPS. The span at 431-449 shows a compositional bias: low complexity; that stretch reads PSSSSIIINNQQQQQQESQ. Positions 490-511 are enriched in pro residues; that stretch reads KPIVLPPPPLDMEQLPLPPPPL. The segment covering 513–526 has biased composition (polar residues); it reads SSQINQSLKSTQHN. Residues 543–560 show a composition bias toward low complexity; sequence IQKQSIPTRKPQLPQSSN. Residues 561–570 show a composition bias toward pro residues; the sequence is PSPPSPPSPQ. One can recognise a Protein kinase domain in the interval 702–959; sequence VIFGDVIAAG…DTLKKISESL (258 aa). ATP is bound by residues 708 to 716 and K729; that span reads IAAGASGKV. The Proton acceptor role is filled by D825.

It belongs to the protein kinase superfamily. TKL Ser/Thr protein kinase family.

The enzyme catalyses L-seryl-[protein] + ATP = O-phospho-L-seryl-[protein] + ADP + H(+). It carries out the reaction L-threonyl-[protein] + ATP = O-phospho-L-threonyl-[protein] + ADP + H(+). This chain is Probable LIM domain-containing serine/threonine-protein kinase DDB_G0286997, found in Dictyostelium discoideum (Social amoeba).